A 567-amino-acid polypeptide reads, in one-letter code: Protein NRT1/ PTR FAMILY 4.5 (567 aa).

The next 12 membrane-spanning stretches (helical) occupy residues 30-50, 70-92, 99-118, 147-167, 189-209, 219-239, 326-346, 374-394, 411-431, 448-468, 491-511, and 535-555; these read GMLAASFVLAVEILENLAFLA, SSSEVTTFMATAFLLALLGGFLA, FVIFLISASIEFLGLILLTI, AFLFVGLYLVSLGIGGIKGSL, FFNYYVFCLSCGALVAVTFVV, WGFGVSTISIFLSILVFLLGS, IVLKMLPIFGCTIMLNCCLAQ, VFPVVFMLILAPTYDHLIIPF, IGVGLVLSIVAMAVAALVELK, LPITFLWIALQYLFLGSADLF, SLSWASLALGYYLSSVMVPIV, and LFYWLMCVLSVVNFLHYLFWA.

The protein belongs to the major facilitator superfamily. Proton-dependent oligopeptide transporter (POT/PTR) (TC 2.A.17) family. Expressed in flowers and siliques.

The protein localises to the membrane. Functionally, involved in abscisic acid transport. The protein is Protein NRT1/ PTR FAMILY 4.5 (NPF4.5) of Arabidopsis thaliana (Mouse-ear cress).